The sequence spans 395 residues: NADH-quinone oxidoreductase subunit D (395 aa).

The protein belongs to the complex I 49 kDa subunit family. As to quaternary structure, NDH-1 is composed of 14 different subunits. Subunits NuoB, C, D, E, F, and G constitute the peripheral sector of the complex.

It localises to the cell inner membrane. It carries out the reaction a quinone + NADH + 5 H(+)(in) = a quinol + NAD(+) + 4 H(+)(out). In terms of biological role, NDH-1 shuttles electrons from NADH, via FMN and iron-sulfur (Fe-S) centers, to quinones in the respiratory chain. The immediate electron acceptor for the enzyme in this species is believed to be ubiquinone. Couples the redox reaction to proton translocation (for every two electrons transferred, four hydrogen ions are translocated across the cytoplasmic membrane), and thus conserves the redox energy in a proton gradient. In Anaplasma phagocytophilum (strain HZ), this protein is NADH-quinone oxidoreductase subunit D.